A 329-amino-acid chain; its full sequence is Caveolae-associated protein 4a (329 aa).

2 disordered regions span residues 198–260 and 274–329; these read SKEN…NIAK and KERT…IHED. Residues 198-262 adopt a coiled-coil conformation; sequence SKENMNKTRE…RLKENIAKKA (65 aa). Residues 201 to 220 are compositionally biased toward basic and acidic residues; it reads NMNKTREKTRENLSKTKESL. The span at 221 to 232 shows a compositional bias: polar residues; that stretch reads SKTGQTLGTKFN. Residues 242–260 are compositionally biased toward basic and acidic residues; that stretch reads EQREKIKQSSERLKENIAK. A compositionally biased stretch (low complexity) spans 279–290; it reads AEGQEGAEAEPA. Thr-292 carries the phosphothreonine modification. A compositionally biased stretch (basic and acidic residues) spans 310 to 329; the sequence is TENKREGPVSEEGATRIHED.

Belongs to the CAVIN family.

It is found in the cytoplasm. The protein localises to the myofibril. It localises to the sarcomere. The protein resides in the membrane. Its subcellular location is the caveola. Induces rhoa activation and activates nppa transcription and myofibrillar organization through the rho/rock signaling pathway. The sequence is that of Caveolae-associated protein 4a (cavin4a) from Danio rerio (Zebrafish).